The sequence spans 225 residues: DNA repair and recombination protein RadB (225 aa).

It belongs to the eukaryotic RecA-like protein family. RadB subfamily.

In terms of biological role, involved in DNA repair and in homologous recombination. May regulate the cleavage reactions of the branch-structured DNA. Has a very weak ATPase activity that is not stimulated by DNA. Binds DNA but does not promote DNA strands exchange. The protein is DNA repair and recombination protein RadB of Methanococcoides burtonii (strain DSM 6242 / NBRC 107633 / OCM 468 / ACE-M).